The primary structure comprises 411 residues: Metacaspase-1B (411 aa).

The segment at 1-97 is disordered; the sequence is MYHRHSAPPP…PPLEAQQFGN (97 aa). The span at 7–65 shows a compositional bias: pro residues; it reads APPPPGRSRGYPPPQQQWPPQPYQYLPYPPQGPPPAHTFPPPAHRSYPSPYPTPPPHSP. Active-site residues include His198 and Cys254.

It belongs to the peptidase C14B family.

Functionally, involved in cell death (apoptosis). The polypeptide is Metacaspase-1B (casB) (Neosartorya fischeri (strain ATCC 1020 / DSM 3700 / CBS 544.65 / FGSC A1164 / JCM 1740 / NRRL 181 / WB 181) (Aspergillus fischerianus)).